We begin with the raw amino-acid sequence, 61 residues long: Large ribosomal subunit protein uL30 (61 aa).

Belongs to the universal ribosomal protein uL30 family. Part of the 50S ribosomal subunit.

This is Large ribosomal subunit protein uL30 from Latilactobacillus sakei subsp. sakei (strain 23K) (Lactobacillus sakei subsp. sakei).